The chain runs to 157 residues: Crossover junction endodeoxyribonuclease RuvC (157 aa).

Active-site residues include Asp-7, Glu-67, and Asp-140. Asp-7, Glu-67, and Asp-140 together coordinate Mg(2+).

The protein belongs to the RuvC family. As to quaternary structure, homodimer which binds Holliday junction (HJ) DNA. The HJ becomes 2-fold symmetrical on binding to RuvC with unstacked arms; it has a different conformation from HJ DNA in complex with RuvA. In the full resolvosome a probable DNA-RuvA(4)-RuvB(12)-RuvC(2) complex forms which resolves the HJ. It depends on Mg(2+) as a cofactor.

It localises to the cytoplasm. It carries out the reaction Endonucleolytic cleavage at a junction such as a reciprocal single-stranded crossover between two homologous DNA duplexes (Holliday junction).. In terms of biological role, the RuvA-RuvB-RuvC complex processes Holliday junction (HJ) DNA during genetic recombination and DNA repair. Endonuclease that resolves HJ intermediates. Cleaves cruciform DNA by making single-stranded nicks across the HJ at symmetrical positions within the homologous arms, yielding a 5'-phosphate and a 3'-hydroxyl group; requires a central core of homology in the junction. The consensus cleavage sequence is 5'-(A/T)TT(C/G)-3'. Cleavage occurs on the 3'-side of the TT dinucleotide at the point of strand exchange. HJ branch migration catalyzed by RuvA-RuvB allows RuvC to scan DNA until it finds its consensus sequence, where it cleaves and resolves the cruciform DNA. The sequence is that of Crossover junction endodeoxyribonuclease RuvC from Rickettsia prowazekii (strain Madrid E).